Here is a 359-residue protein sequence, read N- to C-terminus: DNA integrity scanning protein DisA (359 aa).

Residues 7 to 146 (DDIFRATLAA…GRRYVLDGSA (140 aa)) enclose the DAC domain. ATP-binding positions include Gly-74, Leu-92, and 105 to 109 (TRHRT).

This sequence belongs to the DisA family. Homooctamer. The cofactor is Mg(2+).

The enzyme catalyses 2 ATP = 3',3'-c-di-AMP + 2 diphosphate. Its function is as follows. Participates in a DNA-damage check-point that is active prior to asymmetric division when DNA is damaged. DisA forms globular foci that rapidly scan along the chromosomes during sporulation, searching for lesions. When a lesion is present, DisA pauses at the lesion site. This triggers a cellular response that culminates in a temporary block in sporulation initiation. In terms of biological role, also has diadenylate cyclase activity, catalyzing the condensation of 2 ATP molecules into cyclic di-AMP (c-di-AMP). c-di-AMP acts as a signaling molecule that couples DNA integrity with progression of sporulation. The rise in c-di-AMP level generated by DisA while scanning the chromosome, operates as a positive signal that advances sporulation; upon encountering a lesion, the DisA focus arrests at the damaged site and halts c-di-AMP synthesis. This chain is DNA integrity scanning protein DisA, found in Frankia alni (strain DSM 45986 / CECT 9034 / ACN14a).